We begin with the raw amino-acid sequence, 351 residues long: Nicotinate-nucleotide--dimethylbenzimidazole phosphoribosyltransferase (351 aa).

Catalysis depends on glutamate 318, which acts as the Proton acceptor.

Belongs to the CobT family.

It catalyses the reaction 5,6-dimethylbenzimidazole + nicotinate beta-D-ribonucleotide = alpha-ribazole 5'-phosphate + nicotinate + H(+). It participates in nucleoside biosynthesis; alpha-ribazole biosynthesis; alpha-ribazole from 5,6-dimethylbenzimidazole: step 1/2. Catalyzes the synthesis of alpha-ribazole-5'-phosphate from nicotinate mononucleotide (NAMN) and 5,6-dimethylbenzimidazole (DMB). The sequence is that of Nicotinate-nucleotide--dimethylbenzimidazole phosphoribosyltransferase from Shewanella frigidimarina (strain NCIMB 400).